The following is a 357-amino-acid chain: Trans-resveratrol di-O-methyltransferase (357 aa).

5 residues coordinate S-adenosyl-L-methionine: glycine 200, aspartate 223, aspartate 243, methionine 244, and lysine 257. Catalysis depends on histidine 261, which acts as the Proton acceptor.

Belongs to the class I-like SAM-binding methyltransferase superfamily. Cation-independent O-methyltransferase family. COMT subfamily.

The enzyme catalyses trans-resveratrol + 2 S-adenosyl-L-methionine = pterostilbene + 2 S-adenosyl-L-homocysteine + 2 H(+). Its function is as follows. Catalyzes the biosynthesis of pterostilbene from resveratrol. Pterostilbene has both antifungal and pharmacological properties. Also has activity toward resveratrol monomethyl ether (RME). This chain is Trans-resveratrol di-O-methyltransferase (ROMT), found in Vitis vinifera (Grape).